A 307-amino-acid polypeptide reads, in one-letter code: Nicotinamide/nicotinic acid mononucleotide adenylyltransferase 2 (307 aa).

The NAD(+) site is built by serine 16 and phenylalanine 17. Histidine 24 lines the ATP pocket. 2 residues coordinate NAD(+): tryptophan 92 and threonine 95. S-palmitoyl cysteine attachment occurs at residues cysteine 164 and cysteine 165. Residues glycine 200, aspartate 202, leucine 212, tryptophan 213, and arginine 232 each coordinate NAD(+). 271–274 (TKSR) contacts ATP.

Belongs to the eukaryotic NMN adenylyltransferase family. In terms of assembly, monomer. It depends on Mg(2+) as a cofactor. Post-translationally, degraded in response to injured neurite. Degradation is caused by polyubiquitination by MYCBP2 after recognition by FBXO45. Palmitoylated; palmitoylation is required for membrane association.

The protein resides in the golgi apparatus membrane. It localises to the cytoplasmic vesicle membrane. The protein localises to the cytoplasm. It is found in the cell projection. Its subcellular location is the axon. It catalyses the reaction beta-nicotinamide D-ribonucleotide + ATP + H(+) = diphosphate + NAD(+). The enzyme catalyses nicotinate beta-D-ribonucleotide + ATP + H(+) = deamido-NAD(+) + diphosphate. The protein operates within cofactor biosynthesis; NAD(+) biosynthesis; NAD(+) from nicotinamide D-ribonucleotide: step 1/1. Its pathway is cofactor biosynthesis; NAD(+) biosynthesis; deamido-NAD(+) from nicotinate D-ribonucleotide: step 1/1. Inhibited by P1-(adenosine-5')-P3-(nicotinamide-riboside-5')-triphosphate (Np3AD) and P1-(adenosine-5')-P4-(nicotinamide-riboside-5')-tetraphosphate (Np4AD). Nicotinamide/nicotinate-nucleotide adenylyltransferase that acts as an axon maintenance factor. Axon survival factor required for the maintenance of healthy axons: acts by delaying Wallerian axon degeneration, an evolutionarily conserved process that drives the loss of damaged axons. Catalyzes the formation of NAD(+) from nicotinamide mononucleotide (NMN) and ATP. Can also use the deamidated form; nicotinic acid mononucleotide (NaMN) as substrate but with a lower efficiency. Cannot use triazofurin monophosphate (TrMP) as substrate. Also catalyzes the reverse reaction, i.e. the pyrophosphorolytic cleavage of NAD(+). For the pyrophosphorolytic activity prefers NAD(+), NADH and NaAD as substrates and degrades nicotinic acid adenine dinucleotide phosphate (NHD) less effectively. Fails to cleave phosphorylated dinucleotides NADP(+), NADPH and NaADP(+). Also acts as an activator of ADP-ribosylation by supporting the catalytic activity of PARP16 and promoting mono-ADP-ribosylation of ribosomes by PARP16. May be involved in the maintenance of axonal integrity. This is Nicotinamide/nicotinic acid mononucleotide adenylyltransferase 2 (NMNAT2) from Pongo abelii (Sumatran orangutan).